A 56-amino-acid polypeptide reads, in one-letter code: Large ribosomal subunit protein bL33 (56 aa).

This sequence belongs to the bacterial ribosomal protein bL33 family.

This Nocardioides sp. (strain ATCC BAA-499 / JS614) protein is Large ribosomal subunit protein bL33.